We begin with the raw amino-acid sequence, 290 residues long: Zinc finger matrin-type protein 3 (290 aa).

2 Matrin-type zinc fingers span residues leucine 70–asparagine 100 and aspartate 148–leucine 178. Disordered stretches follow at residues glutamine 182–glutamate 203 and glutamate 266–glutamine 290. The Matrin-type 3 zinc finger occupies phenylalanine 246–glutamate 276. The span at glutamate 266 to methionine 283 shows a compositional bias: basic and acidic residues.

In terms of assembly, interacts with dsRNA. In terms of tissue distribution, constitutively expressed in brain and testis. Also expressed in lung, kidney and spleen after whole body gamma irradiation.

The protein resides in the nucleus. It localises to the nucleolus. Functionally, acts as a bona fide target gene of p53/TP53. May play a role in the TP53-dependent growth regulatory pathway. May contribute to TP53-mediated apoptosis by regulation of TP53 expression and translocation to the nucleus and nucleolus. In Mus musculus (Mouse), this protein is Zinc finger matrin-type protein 3.